The sequence spans 545 residues: ATP synthase subunit alpha (545 aa).

Residue 172 to 179 (GDRKTGKT) participates in ATP binding.

It belongs to the ATPase alpha/beta chains family. F-type ATPases have 2 components, CF(1) - the catalytic core - and CF(0) - the membrane proton channel. CF(1) has five subunits: alpha(3), beta(3), gamma(1), delta(1), epsilon(1). CF(0) has three main subunits: a(1), b(2) and c(9-12). The alpha and beta chains form an alternating ring which encloses part of the gamma chain. CF(1) is attached to CF(0) by a central stalk formed by the gamma and epsilon chains, while a peripheral stalk is formed by the delta and b chains.

The protein localises to the cell membrane. The enzyme catalyses ATP + H2O + 4 H(+)(in) = ADP + phosphate + 5 H(+)(out). In terms of biological role, produces ATP from ADP in the presence of a proton gradient across the membrane. The alpha chain is a regulatory subunit. The polypeptide is ATP synthase subunit alpha (Nocardia farcinica (strain IFM 10152)).